Consider the following 617-residue polypeptide: Protein DWARF AND LOW-TILLERING (617 aa).

Disordered regions lie at residues 29–92 and 159–206; these read KRGS…HDED and PSLA…GVPA. Residues 171–187 are compositionally biased toward low complexity; that stretch reads KSPSDSSSSSGTDGGSS. A GRAS domain is found at 208-594; it reads GQAEREALEL…QPLYTVTAWT (387 aa). Residues 215 to 295 form a leucine repeat I (LRI) region; the sequence is LELVRALTAC…LTDDAFGGGD (81 aa). The segment at 301–366 is VHIID; that stretch reads LRILNAITPI…VPPAHVRITG (66 aa). The short motif at 332–336 is the VHIID element; that stretch reads VHVID. Residues 376 to 408 are leucine repeat II (LRII); that stretch reads ETGARLARVAAALGLAFEFHAVVDRLEDVRLWM. The PFYRE stretch occupies residues 417–508; the sequence is VAVNCVLAMH…EEMFAREIRN (92 aa). The interval 511–594 is SAW; it reads AFEGPERFER…QPLYTVTAWT (84 aa). The interval 596–617 is disordered; that stretch reads AGDGAGGSTVSASTTASHSQQS. A compositionally biased stretch (low complexity) spans 603–617; sequence STVSASTTASHSQQS.

Belongs to the GRAS family. Interacts with GSK2. Interacts with SMOS1 (via C-terminus). Post-translationally, phosphorylated on serine and threonine residues by GSK2. Dephosphorylated during response to brassinosteroid. In terms of tissue distribution, expressed in the shoot apical meristem (SAM) and elongating cells of young seedlings. Expressed in leaf joints, culms, internodes, stems, young panicles, primary roots and lateral roots.

The protein resides in the nucleus. Probable transcription factor that acts as a positive regulator of brassinosteroid (BR) signaling. Functions downstream of BRI1 and GSK2 to modulate BR responses. Acts as a direct target of GSK2 kinase to mediate BR responses. Involved in feedback inhibition of BR biosynthetic genes. Repressed by BZR1. Cooperatively functions in a transactivating complex with SMOS1 to enhance the transcription of the SMOS1 target PHI-1, and regulate plant organ size. Interaction between SMOS1 and DLT is a crosstalk point for auxin and brassinosteroid signaling. This is Protein DWARF AND LOW-TILLERING from Oryza sativa subsp. japonica (Rice).